We begin with the raw amino-acid sequence, 445 residues long: Phosphoglucosamine mutase (445 aa).

Catalysis depends on Ser-102, which acts as the Phosphoserine intermediate. Mg(2+) contacts are provided by Ser-102, Asp-241, Asp-243, and Asp-245. At Ser-102 the chain carries Phosphoserine.

The protein belongs to the phosphohexose mutase family. The cofactor is Mg(2+). In terms of processing, activated by phosphorylation.

It catalyses the reaction alpha-D-glucosamine 1-phosphate = D-glucosamine 6-phosphate. Functionally, catalyzes the conversion of glucosamine-6-phosphate to glucosamine-1-phosphate. The chain is Phosphoglucosamine mutase from Rhodococcus opacus (strain B4).